Here is a 237-residue protein sequence, read N- to C-terminus: Probable septum site-determining protein MinC (237 aa).

Belongs to the MinC family. Interacts with MinD and FtsZ.

In terms of biological role, cell division inhibitor that blocks the formation of polar Z ring septums. Rapidly oscillates between the poles of the cell to destabilize FtsZ filaments that have formed before they mature into polar Z rings. Prevents FtsZ polymerization. This is Probable septum site-determining protein MinC from Buchnera aphidicola subsp. Acyrthosiphon pisum (strain 5A).